The primary structure comprises 368 residues: Methionine import ATP-binding protein MetN (368 aa).

The region spanning 5-260 is the ABC transporter domain; sequence IELNNLSVQF…PKEALTKQFI (256 aa). 41–48 provides a ligand contact to ATP; sequence GYSGAGKS.

Belongs to the ABC transporter superfamily. Methionine importer (TC 3.A.1.24) family. As to quaternary structure, the complex is composed of two ATP-binding proteins (MetN), two transmembrane proteins (MetI) and a solute-binding protein (MetQ).

It is found in the cell membrane. It carries out the reaction L-methionine(out) + ATP + H2O = L-methionine(in) + ADP + phosphate + H(+). The enzyme catalyses D-methionine(out) + ATP + H2O = D-methionine(in) + ADP + phosphate + H(+). Functionally, part of the ABC transporter complex MetNIQ involved in methionine import. Responsible for energy coupling to the transport system. The sequence is that of Methionine import ATP-binding protein MetN from Lactococcus lactis subsp. cremoris (strain SK11).